Here is a 391-residue protein sequence, read N- to C-terminus: Anhydro-N-acetylmuramic acid kinase (391 aa).

Glycine 9 to glutamate 16 is a binding site for ATP.

This sequence belongs to the anhydro-N-acetylmuramic acid kinase family.

The enzyme catalyses 1,6-anhydro-N-acetyl-beta-muramate + ATP + H2O = N-acetyl-D-muramate 6-phosphate + ADP + H(+). It functions in the pathway amino-sugar metabolism; 1,6-anhydro-N-acetylmuramate degradation. It participates in cell wall biogenesis; peptidoglycan recycling. Catalyzes the specific phosphorylation of 1,6-anhydro-N-acetylmuramic acid (anhMurNAc) with the simultaneous cleavage of the 1,6-anhydro ring, generating MurNAc-6-P. Is required for the utilization of anhMurNAc either imported from the medium or derived from its own cell wall murein, and thus plays a role in cell wall recycling. The chain is Anhydro-N-acetylmuramic acid kinase from Streptomyces coelicolor (strain ATCC BAA-471 / A3(2) / M145).